Reading from the N-terminus, the 198-residue chain is Molybdenum cofactor guanylyltransferase (198 aa).

GTP-binding positions include 14–16 (LAG), K27, D73, and D103. D103 is a binding site for Mg(2+).

Belongs to the MobA family. Monomer. It depends on Mg(2+) as a cofactor.

It is found in the cytoplasm. The catalysed reaction is Mo-molybdopterin + GTP + H(+) = Mo-molybdopterin guanine dinucleotide + diphosphate. In terms of biological role, transfers a GMP moiety from GTP to Mo-molybdopterin (Mo-MPT) cofactor (Moco or molybdenum cofactor) to form Mo-molybdopterin guanine dinucleotide (Mo-MGD) cofactor. The polypeptide is Molybdenum cofactor guanylyltransferase (Pseudomonas paraeruginosa (strain DSM 24068 / PA7) (Pseudomonas aeruginosa (strain PA7))).